A 227-amino-acid polypeptide reads, in one-letter code: MNTWMNFNLQNSNSPLMEQLMFFHNHSMLIILLITILVGYIMSSLLYNKLYNRYLLESQNVEIIWTILPAFMLIFIALPSLRLLYLLDDSNSPLISLKAIGHQWYWSYEYTDFNNISFDSYMIPSNELNLNSFRLLDVDNRIILPINSQIRILITATDVLHSWTIPSLGIKIDATPGRLNQSNFMMNRPGLYFGQCSEICGANHSFMPIVIESILINSFIKWISSNS.

The Mitochondrial intermembrane segment spans residues 1-26 (MNTWMNFNLQNSNSPLMEQLMFFHNH). Residues 27 to 48 (SMLIILLITILVGYIMSSLLYN) traverse the membrane as a helical segment. Topologically, residues 49–62 (KLYNRYLLESQNVE) are mitochondrial matrix. Residues 63 to 82 (IIWTILPAFMLIFIALPSLR) form a helical membrane-spanning segment. Over 83–227 (LLYLLDDSNS…SFIKWISSNS (145 aa)) the chain is Mitochondrial intermembrane. Cu cation-binding residues include His-161, Cys-196, Glu-198, Cys-200, His-204, and Met-207. Glu-198 provides a ligand contact to Mg(2+).

It belongs to the cytochrome c oxidase subunit 2 family. Component of the cytochrome c oxidase (complex IV, CIV), a multisubunit enzyme composed of a catalytic core of 3 subunits and several supernumerary subunits. The complex exists as a monomer or a dimer and forms supercomplexes (SCs) in the inner mitochondrial membrane with ubiquinol-cytochrome c oxidoreductase (cytochrome b-c1 complex, complex III, CIII). Cu cation serves as cofactor.

The protein localises to the mitochondrion inner membrane. It catalyses the reaction 4 Fe(II)-[cytochrome c] + O2 + 8 H(+)(in) = 4 Fe(III)-[cytochrome c] + 2 H2O + 4 H(+)(out). Its function is as follows. Component of the cytochrome c oxidase, the last enzyme in the mitochondrial electron transport chain which drives oxidative phosphorylation. The respiratory chain contains 3 multisubunit complexes succinate dehydrogenase (complex II, CII), ubiquinol-cytochrome c oxidoreductase (cytochrome b-c1 complex, complex III, CIII) and cytochrome c oxidase (complex IV, CIV), that cooperate to transfer electrons derived from NADH and succinate to molecular oxygen, creating an electrochemical gradient over the inner membrane that drives transmembrane transport and the ATP synthase. Cytochrome c oxidase is the component of the respiratory chain that catalyzes the reduction of oxygen to water. Electrons originating from reduced cytochrome c in the intermembrane space (IMS) are transferred via the dinuclear copper A center (CU(A)) of subunit 2 and heme A of subunit 1 to the active site in subunit 1, a binuclear center (BNC) formed by heme A3 and copper B (CU(B)). The BNC reduces molecular oxygen to 2 water molecules using 4 electrons from cytochrome c in the IMS and 4 protons from the mitochondrial matrix. This is Cytochrome c oxidase subunit 2 (COII) from Ctenocephalides felis (Cat flea).